The chain runs to 265 residues: MKIAIAGASGRMGRMLIEAVLNDSDAQLVGALDRADSPFLGQDAGAFLGKETGVKLTDDLDAVFAQADYLIDFTRPEGTIAHVAAALRHEVKLVIGTTGFTAEQKAELQAAAARIGIVFAANMSVGVNVTLKLLEFAAKHFSHGYDIEIIEAHHRHKVDAPSGTALMMGEAVAGALGRSLEDCAVYGRQGVTGERDPSTIGFAAVRGGDIVGDHTVLFAGIGERIEITHKSSSRVSYAQGALRAVRFLSARGAGLFDMQDVLGLR.

NAD(+) contacts are provided by residues 7–12 and Asp-33; that span reads GASGRM. Residue Arg-34 coordinates NADP(+). Residues 96-98 and 120-123 each bind NAD(+); these read GTT and AANM. His-153 (proton donor/acceptor) is an active-site residue. A (S)-2,3,4,5-tetrahydrodipicolinate-binding site is contributed by His-154. Lys-157 serves as the catalytic Proton donor. (S)-2,3,4,5-tetrahydrodipicolinate is bound at residue 163-164; it reads GT.

It belongs to the DapB family.

It localises to the cytoplasm. The catalysed reaction is (S)-2,3,4,5-tetrahydrodipicolinate + NAD(+) + H2O = (2S,4S)-4-hydroxy-2,3,4,5-tetrahydrodipicolinate + NADH + H(+). It catalyses the reaction (S)-2,3,4,5-tetrahydrodipicolinate + NADP(+) + H2O = (2S,4S)-4-hydroxy-2,3,4,5-tetrahydrodipicolinate + NADPH + H(+). It functions in the pathway amino-acid biosynthesis; L-lysine biosynthesis via DAP pathway; (S)-tetrahydrodipicolinate from L-aspartate: step 4/4. Catalyzes the conversion of 4-hydroxy-tetrahydrodipicolinate (HTPA) to tetrahydrodipicolinate. This chain is 4-hydroxy-tetrahydrodipicolinate reductase, found in Burkholderia ambifaria (strain ATCC BAA-244 / DSM 16087 / CCUG 44356 / LMG 19182 / AMMD) (Burkholderia cepacia (strain AMMD)).